The chain runs to 919 residues: Glutamate receptor ionotropic, kainate 3 (919 aa).

The signal sequence occupies residues 1–31; that stretch reads MTAPWRRLRSLVWEYWAGLLVCAFWIPDSRG. Over 32–563 the chain is Extracellular; the sequence is MPHVIRIGGI…VFSFLNPLSP (532 aa). N-linked (GlcNAc...) asparagine glycosylation is found at Asn70, Asn76, Asn278, Asn381, Asn415, Asn426, and Asn433. Cys99 and Cys350 are disulfide-bonded. Residues Pro518, Thr520, and Arg525 each coordinate L-glutamate. Residues Asn548 and Asn551 are each glycosylated (N-linked (GlcNAc...) asparagine). The helical transmembrane segment at 564-584 threads the bilayer; that stretch reads DIWMYVLLAYLGVSCVLFVIA. The Cytoplasmic portion of the chain corresponds to 585-636; it reads RFSPYEWYDAHPCNPGSEVVENNFTLLNSFWFGMGSLMQQGSELMPKALSTR. The helical transmembrane segment at 637–657 threads the bilayer; the sequence is IIGGIWWFFTLIIISSYTANL. Topologically, residues 658 to 820 are extracellular; the sequence is AAFLTVERME…KEASALGIQK (163 aa). Ala691, Thr692, and Glu739 together coordinate L-glutamate. A glycan (N-linked (GlcNAc...) asparagine) is linked at Asn752. A helical membrane pass occupies residues 821–841; sequence IGGIFIVLAAGLVLSVLVAVG. Over 842 to 919 the chain is Cytoplasmic; sequence EFVYKLRKTA…CSTSLAPVFP (78 aa). Ser869 carries the post-translational modification Phosphoserine. Residue Lys887 forms a Glycyl lysine isopeptide (Lys-Gly) (interchain with G-Cter in SUMO1) linkage.

The protein belongs to the glutamate-gated ion channel (TC 1.A.10.1) family. GRIK3 subfamily. Homotetramer, and heterotetramer with either GRIK4 or GRIK5. Can form functional heteromeric receptors with GRIK2. Interacts with PRKCABP. Interacts with NETO2.

It is found in the cell membrane. It localises to the postsynaptic cell membrane. The enzyme catalyses Ca(2+)(in) = Ca(2+)(out). Functionally, ionotropic glutamate receptor that functions as a cation-permeable ligand-gated ion channel, gated by L-glutamate and the glutamatergic agonist kainic acid. Binding of the excitatory neurotransmitter L-glutamate induces a conformation change, leading to the opening of the cation channel, and thereby converts the chemical signal to an electrical impulse. The receptor then desensitizes rapidly and enters a transient inactive state, characterized by the presence of bound agonist. In association with GRIK2, involved in presynaptic facilitation of glutamate release at hippocampal mossy fiber synapses. The chain is Glutamate receptor ionotropic, kainate 3 (GRIK3) from Macaca fascicularis (Crab-eating macaque).